The sequence spans 359 residues: 3-dehydroquinate synthase (359 aa).

NAD(+) contacts are provided by residues 71-76 (DGEQFK), 105-109 (GVIGD), 129-130 (TT), K142, K151, and 169-172 (CLQT). Zn(2+) is bound by residues E184, H247, and H264.

It belongs to the sugar phosphate cyclases superfamily. Dehydroquinate synthase family. The cofactor is Co(2+). Requires Zn(2+) as cofactor. NAD(+) serves as cofactor.

The protein resides in the cytoplasm. The catalysed reaction is 7-phospho-2-dehydro-3-deoxy-D-arabino-heptonate = 3-dehydroquinate + phosphate. The protein operates within metabolic intermediate biosynthesis; chorismate biosynthesis; chorismate from D-erythrose 4-phosphate and phosphoenolpyruvate: step 2/7. Catalyzes the conversion of 3-deoxy-D-arabino-heptulosonate 7-phosphate (DAHP) to dehydroquinate (DHQ). In Shewanella sp. (strain MR-4), this protein is 3-dehydroquinate synthase.